The primary structure comprises 357 residues: Cinnamyl alcohol dehydrogenase 5 (357 aa).

Cys47 serves as a coordination point for Zn(2+). Position 49 (Thr49) interacts with NADP(+). 7 residues coordinate Zn(2+): His69, Glu70, Cys100, Cys103, Cys106, Cys114, and Cys163. Residues Thr167, 188 to 193, 211 to 216, Thr251, Gly275, and 298 to 300 each bind NADP(+); these read GLGGVG, SSSNKK, and SFI.

It belongs to the zinc-containing alcohol dehydrogenase family. In terms of assembly, homodimer. The cofactor is Zn(2+). Expressed at the lateral root initiation sites, in the vascular tissues of the primary lateral root and the root caps. Expressed in the hypocotyl, cotyledon and leaf veins, apical meristem region, at the base of the trichomes, hydathodes and cauline leaves. In stems, expressed in the cells associated with the vascular cambium, interfascicular cambium and the developing xylem. Expressed in the vascular strand of petals and sepals, anthers, stamen filaments, stigma in flowers, and abscission, style and stigmatic regions of siliques.

It catalyses the reaction (E)-cinnamyl alcohol + NADP(+) = (E)-cinnamaldehyde + NADPH + H(+). The enzyme catalyses (E)-coniferol + NADP(+) = (E)-coniferaldehyde + NADPH + H(+). It carries out the reaction (E)-sinapyl alcohol + NADP(+) = (E)-sinapaldehyde + NADPH + H(+). The catalysed reaction is (E)-4-coumaroyl alcohol + NADP(+) = (E)-4-coumaraldehyde + NADPH + H(+). It catalyses the reaction (E)-caffeyl alcohol + NADP(+) = (E)-caffeyl aldehyde + NADPH + H(+). It functions in the pathway aromatic compound metabolism; phenylpropanoid biosynthesis. Its function is as follows. Involved in lignin biosynthesis in the floral stem. Catalyzes the final step specific for the production of lignin monomers. Catalyzes the NADPH-dependent reduction of coniferaldehyde, 5-hydroxyconiferaldehyde, sinapaldehyde, 4-coumaraldehyde and caffeyl aldehyde to their respective alcohols. This chain is Cinnamyl alcohol dehydrogenase 5, found in Arabidopsis thaliana (Mouse-ear cress).